The sequence spans 1171 residues: Protein diaphanous homolog 3 (1171 aa).

The segment covering 1–15 (MERHRARALGRDSKS) has biased composition (basic and acidic residues). The tract at residues 1–40 (MERHRARALGRDSKSSRRKGLQSAPPAGPYEPGEKRPKLH) is disordered. The short motif at 16 to 39 (SRRKGLQSAPPAGPYEPGEKRPKL) is the Nuclear localization signal element. Thr-47 carries the post-translational modification Phosphothreonine. Phosphoserine is present on Ser-56. The interval 60 to 95 (PGSKKERPPLPHLKTVSGISDSSSLSSETMENNPKA) is disordered. Over residues 76–86 (SGISDSSSLSS) the composition is skewed to low complexity. The region spanning 93–455 (PKALPESEVL…QIVLHRDGTD (363 aa)) is the GBD/FH3 domain. Ser-154 is subject to Phosphoserine. Coiled coils occupy residues 373–403 (EHKEEDLSEFFHRLEDIRAELDEASDVYSML) and 478–533 (QAKL…FGAL). The tract at residues 532–601 (ALPPGTKIPL…PPPPLGFLGG (70 aa)) is disordered. An FH1 domain is found at 540-610 (PLQPSVEGEA…GQSSIPLNLP (71 aa)). Over residues 553-596 (ALPPAPPALSGGVPPPPPPPPPPPPPLPGMPMPFGGPVPPPPPL) the composition is skewed to pro residues. The residue at position 604 (Ser-604) is a Phosphoserine. The FH2 domain maps to 615–1013 (PKKEFKPEIS…EKRARIAKER (399 aa)). 2 coiled-coil regions span residues 887–918 (DKASRVSVEMLEKNVKQMGRQLQQLEKNLETF) and 988–1038 (MLAL…GDET). Positions 1036-1066 (DETGVMDSLLEALQSGAAFRDRRKRTPKLKD) constitute a DAD domain. Phosphoserine is present on residues Ser-1072 and Ser-1157. A Nuclear export signal motif is present at residues 1162–1171 (EALLARLRAL).

The protein belongs to the formin homology family. Diaphanous subfamily. Post-translationally, ubiquitinated.

It localises to the cytoplasm. Its subcellular location is the nucleus. Its function is as follows. Actin nucleation and elongation factor required for the assembly of F-actin structures, such as actin cables and stress fibers. Required for cytokinesis, stress fiber formation and transcriptional activation of the serum response factor. Binds to GTP-bound form of Rho and to profilin: acts in a Rho-dependent manner to recruit profilin to the membrane, where it promotes actin polymerization. DFR proteins couple Rho and Src tyrosine kinase during signaling and the regulation of actin dynamics. Also acts as an actin nucleation and elongation factor in the nucleus by promoting nuclear actin polymerization inside the nucleus to drive serum-dependent SRF-MRTFA activity. In Mus musculus (Mouse), this protein is Protein diaphanous homolog 3 (Diaph3).